Reading from the N-terminus, the 338-residue chain is Ketol-acid reductoisomerase (NADP(+)) (338 aa).

The region spanning 1–181 (MKVFYDKDCD…GGGRTGIIET (181 aa)) is the KARI N-terminal Rossmann domain. Residues 24–27 (YGSQ), Arg-47, Ser-50, Thr-52, and 82–85 (DEFQ) contribute to the NADP(+) site. His-107 is a catalytic residue. Gly-133 serves as a coordination point for NADP(+). The KARI C-terminal knotted domain maps to 182–327 (TFKDETETDL…EQLRSMMPWI (146 aa)). Mg(2+)-binding residues include Asp-190, Glu-194, Glu-226, and Glu-230. A substrate-binding site is contributed by Ser-251.

This sequence belongs to the ketol-acid reductoisomerase family. It depends on Mg(2+) as a cofactor.

It catalyses the reaction (2R)-2,3-dihydroxy-3-methylbutanoate + NADP(+) = (2S)-2-acetolactate + NADPH + H(+). It carries out the reaction (2R,3R)-2,3-dihydroxy-3-methylpentanoate + NADP(+) = (S)-2-ethyl-2-hydroxy-3-oxobutanoate + NADPH + H(+). It participates in amino-acid biosynthesis; L-isoleucine biosynthesis; L-isoleucine from 2-oxobutanoate: step 2/4. Its pathway is amino-acid biosynthesis; L-valine biosynthesis; L-valine from pyruvate: step 2/4. In terms of biological role, involved in the biosynthesis of branched-chain amino acids (BCAA). Catalyzes an alkyl-migration followed by a ketol-acid reduction of (S)-2-acetolactate (S2AL) to yield (R)-2,3-dihydroxy-isovalerate. In the isomerase reaction, S2AL is rearranged via a Mg-dependent methyl migration to produce 3-hydroxy-3-methyl-2-ketobutyrate (HMKB). In the reductase reaction, this 2-ketoacid undergoes a metal-dependent reduction by NADPH to yield (R)-2,3-dihydroxy-isovalerate. The sequence is that of Ketol-acid reductoisomerase (NADP(+)) from Pseudomonas fluorescens (strain ATCC BAA-477 / NRRL B-23932 / Pf-5).